Consider the following 360-residue polypeptide: Photosystem II protein D1 (360 aa).

Transmembrane regions (helical) follow at residues 29–46, 118–133, and 142–156; these read YIGW…TATT, HFLL…EWEL, and WIAV…AATA. A chlorophyll a-binding site is contributed by H118. Y126 provides a ligand contact to pheophytin a. Residues D170 and E189 each contribute to the [CaMn4O5] cluster site. Residues 197–218 form a helical membrane-spanning segment; that stretch reads FHMMGVAGVFGGSLFSAMHGSL. Position 198 (H198) interacts with chlorophyll a. Residues H215 and 264–265 contribute to the a quinone site; that span reads SF. H215 lines the Fe cation pocket. H272 is a Fe cation binding site. A helical membrane pass occupies residues 274 to 288; that stretch reads FLALWPVVGIWFTAL. 4 residues coordinate [CaMn4O5] cluster: H332, E333, D342, and A344. A propeptide spanning residues 345–360 is cleaved from the precursor; sequence SGEVMPVALTAPSINA.

It belongs to the reaction center PufL/M/PsbA/D family. In terms of assembly, PSII is composed of 1 copy each of membrane proteins PsbA, PsbB, PsbC, PsbD, PsbE, PsbF, PsbH, PsbI, PsbJ, PsbK, PsbL, PsbM, PsbT, PsbX, PsbY, PsbZ, Psb30/Ycf12, at least 3 peripheral proteins of the oxygen-evolving complex and a large number of cofactors. It forms dimeric complexes. The D1/D2 heterodimer binds P680, chlorophylls that are the primary electron donor of PSII, and subsequent electron acceptors. It shares a non-heme iron and each subunit binds pheophytin, quinone, additional chlorophylls, carotenoids and lipids. D1 provides most of the ligands for the Mn4-Ca-O5 cluster of the oxygen-evolving complex (OEC). There is also a Cl(-1) ion associated with D1 and D2, which is required for oxygen evolution. The PSII complex binds additional chlorophylls, carotenoids and specific lipids. is required as a cofactor. Post-translationally, tyr-161 forms a radical intermediate that is referred to as redox-active TyrZ, YZ or Y-Z. In terms of processing, C-terminally processed by CTPA; processing is essential to allow assembly of the oxygen-evolving complex and thus photosynthetic growth.

The protein localises to the plastid. It localises to the cyanelle thylakoid membrane. It carries out the reaction 2 a plastoquinone + 4 hnu + 2 H2O = 2 a plastoquinol + O2. In terms of biological role, photosystem II (PSII) is a light-driven water:plastoquinone oxidoreductase that uses light energy to abstract electrons from H(2)O, generating O(2) and a proton gradient subsequently used for ATP formation. It consists of a core antenna complex that captures photons, and an electron transfer chain that converts photonic excitation into a charge separation. The D1/D2 (PsbA/PsbD) reaction center heterodimer binds P680, the primary electron donor of PSII as well as several subsequent electron acceptors. The chain is Photosystem II protein D1 from Cyanophora paradoxa.